Consider the following 890-residue polypeptide: tRNase Z TRZ3, mitochondrial (890 aa).

Residues 1–44 (MINSMPYLHKNLRLLRLLSSKSSPFPLSLRPFSPRSFSLSTLFS) constitute a mitochondrion transit peptide. The tract at residues 46–67 (SSSSSSMENNEATNGSKSSSNS) is disordered.

Belongs to the RNase Z family. As to quaternary structure, homodimer. Zn(2+) is required as a cofactor. Requires Ca(2+) as cofactor. It depends on Mn(2+) as a cofactor. Mg(2+) serves as cofactor.

Its subcellular location is the mitochondrion. The protein localises to the nucleus. It carries out the reaction Endonucleolytic cleavage of RNA, removing extra 3' nucleotides from tRNA precursor, generating 3' termini of tRNAs. A 3'-hydroxy group is left at the tRNA terminus and a 5'-phosphoryl group is left at the trailer molecule.. Functionally, zinc phosphodiesterase, which displays tRNA 3'-processing endonuclease activity. Involved in tRNA maturation, by removing a 3'-trailer from precursor tRNA. Can process the mitochondrial tRNA-like structures (t-elements). Involved in the processing of small nucleolar RNAs (snoRNAs). The sequence is that of tRNase Z TRZ3, mitochondrial from Arabidopsis thaliana (Mouse-ear cress).